We begin with the raw amino-acid sequence, 178 residues long: Ribosome maturation factor RimM (178 aa).

In terms of domain architecture, PRC barrel spans 95–174 (EGQHFWFNVI…IVHVKDAKDI (80 aa)).

This sequence belongs to the RimM family. Binds ribosomal protein uS19.

The protein localises to the cytoplasm. Functionally, an accessory protein needed during the final step in the assembly of 30S ribosomal subunit, possibly for assembly of the head region. Essential for efficient processing of 16S rRNA. May be needed both before and after RbfA during the maturation of 16S rRNA. It has affinity for free ribosomal 30S subunits but not for 70S ribosomes. This Sulfurovum sp. (strain NBC37-1) protein is Ribosome maturation factor RimM.